The primary structure comprises 179 residues: Peptide deformylase 2 (179 aa).

The Fe cation site is built by C104 and H146. E147 is a catalytic residue. H150 contacts Fe cation.

This sequence belongs to the polypeptide deformylase family. Fe(2+) serves as cofactor.

The catalysed reaction is N-terminal N-formyl-L-methionyl-[peptide] + H2O = N-terminal L-methionyl-[peptide] + formate. In terms of biological role, removes the formyl group from the N-terminal Met of newly synthesized proteins. Requires at least a dipeptide for an efficient rate of reaction. N-terminal L-methionine is a prerequisite for activity but the enzyme has broad specificity at other positions. This is Peptide deformylase 2 from Streptomyces coelicolor (strain ATCC BAA-471 / A3(2) / M145).